Here is a 283-residue protein sequence, read N- to C-terminus: Zinc finger protein 691 (283 aa).

Residues 1-41 are compositionally biased toward basic and acidic residues; that stretch reads MGSEKEQRPEAHLPEEGEGAKPWRVDGSKDSQITPREDHGQ. The tract at residues 1-68 is disordered; sequence MGSEKEQRPE…KVTAQAGGPG (68 aa). Ser-43 is subject to Phosphoserine. Lys-81 is covalently cross-linked (Glycyl lysine isopeptide (Lys-Gly) (interchain with G-Cter in SUMO2)). 7 consecutive C2H2-type zinc fingers follow at residues 83–105, 111–133, 139–161, 167–189, 195–217, 223–245, and 251–273; these read FICA…QRIH, YKCS…ERIH, YQCA…QQDH, YRCD…HRTH, YICC…HRTH, YECT…QRTH, and YRCT…QKTH.

This sequence belongs to the krueppel C2H2-type zinc-finger protein family.

The protein resides in the nucleus. Functionally, may be involved in transcriptional regulation. The polypeptide is Zinc finger protein 691 (Znf691) (Mus musculus (Mouse)).